The following is a 423-amino-acid chain: uncharacterized protein (423 aa).

This is an uncharacterized protein from Ictaluridae (bullhead catfishes).